Consider the following 254-residue polypeptide: MAKMQLSIFIAVVALIVCSASAKTASPPAPVLPPTPAPAPAPENVNLTELLSVAGPFHTFLDYLLSTGVIETFQNQANNTEEGITIFVPKDDAFKAQKNPPLSNLTKDQLKQLVLFHALPHYYSLSEFKNLSQSGPVSTFAGGQYSLKFTDVSGTVRIDSLWTRTKVSSSVFSTDPVAVYQVNRVLLPEAIFGTDVPPMPAPAPAPIVSAPSDSPSVADSEGASSPKSSHKNSGQKLLLAPISMVISGLVALFL.

The first 22 residues, 1–22, serve as a signal peptide directing secretion; sequence MAKMQLSIFIAVVALIVCSASA. In terms of domain architecture, FAS1 spans 44-186; the sequence is NVNLTELLSV…VAVYQVNRVL (143 aa). Asparagine 46, asparagine 78, asparagine 104, and asparagine 130 each carry an N-linked (GlcNAc...) asparagine glycan. The tract at residues 203-233 is disordered; the sequence is APAPIVSAPSDSPSVADSEGASSPKSSHKNS. The span at 206–220 shows a compositional bias: low complexity; that stretch reads PIVSAPSDSPSVADS. The span at 222 to 233 shows a compositional bias: polar residues; the sequence is GASSPKSSHKNS. A lipid anchor (GPI-anchor amidated asparagine) is attached at asparagine 232. Positions 233 to 254 are cleaved as a propeptide — removed in mature form; it reads SGQKLLLAPISMVISGLVALFL.

Belongs to the fasciclin-like AGP family.

Its subcellular location is the cell membrane. Its function is as follows. May be a cell surface adhesion protein. The chain is Fasciclin-like arabinogalactan protein 7 (FLA7) from Arabidopsis thaliana (Mouse-ear cress).